The sequence spans 68 residues: DNA-directed RNA polymerase subunit Rpo10 (68 aa).

The Zn(2+) site is built by Cys7, Cys10, Cys44, and Cys45.

It belongs to the archaeal Rpo10/eukaryotic RPB10 RNA polymerase subunit family. As to quaternary structure, part of the RNA polymerase complex. Requires Zn(2+) as cofactor.

The protein localises to the cytoplasm. It carries out the reaction RNA(n) + a ribonucleoside 5'-triphosphate = RNA(n+1) + diphosphate. DNA-dependent RNA polymerase (RNAP) catalyzes the transcription of DNA into RNA using the four ribonucleoside triphosphates as substrates. In Methanococcus maripaludis (strain C7 / ATCC BAA-1331), this protein is DNA-directed RNA polymerase subunit Rpo10.